We begin with the raw amino-acid sequence, 332 residues long: L-lactate dehydrogenase C chain (332 aa).

Position 2 is a blocked amino end (Ser) (Ser2). NAD(+) contacts are provided by residues Gly29–Lys57 and Arg99. Substrate is bound by residues Arg106, Asn138, and Arg169. NAD(+) is bound at residue Asn138. The active-site Proton acceptor is His193. Thr248 contacts substrate.

This sequence belongs to the LDH/MDH superfamily. LDH family. Homotetramer. Interacts with RABL2/RABL2A; binds preferentially to GTP-bound RABL2. Expressed within the midpiece of sperm tail (at protein level).

It localises to the cytoplasm. The enzyme catalyses (S)-lactate + NAD(+) = pyruvate + NADH + H(+). It participates in fermentation; pyruvate fermentation to lactate; (S)-lactate from pyruvate: step 1/1. Its function is as follows. Possible role in sperm motility. The chain is L-lactate dehydrogenase C chain (Ldhc) from Mus musculus (Mouse).